A 670-amino-acid polypeptide reads, in one-letter code: Kinesin-like protein KIF2B (670 aa).

Thr-122 is modified (phosphothreonine; by PLK1). Residues 146–173 are a coiled coil; that stretch reads CLQEIEKVQKQREKRRRLQQEIRARRAL. Position 201 is a phosphoserine; by PLK1 (Ser-201). Positions 210–540 constitute a Kinesin motor domain; it reads RICVCVRKRP…LRYANRVKEL (331 aa). 300–307 serves as a coordination point for ATP; sequence GQTGSGKT.

This sequence belongs to the TRAFAC class myosin-kinesin ATPase superfamily. Kinesin family. MCAK/KIF2 subfamily. Phosphorylation at Thr-122 by PLK1 is required for activity in the correction of kinetochore-microtubules attachment errors, while phosphorylation at Ser-201 also by PLK1 is required for the kinetochore localization and activity in prometaphase.

It localises to the cytoplasm. The protein localises to the cytoskeleton. The protein resides in the microtubule organizing center. Its subcellular location is the centrosome. It is found in the spindle. It localises to the chromosome. The protein localises to the centromere. The protein resides in the kinetochore. In terms of biological role, plus end-directed microtubule-dependent motor required for spindle assembly and chromosome movement during mitosis. Has microtubule depolymerization activity. Plays a role in chromosome congression. The protein is Kinesin-like protein KIF2B (KIF2B) of Macaca fascicularis (Crab-eating macaque).